A 576-amino-acid polypeptide reads, in one-letter code: Threonine dehydratase, mitochondrial (576 aa).

At Lys109 the chain carries N6-(pyridoxal phosphate)lysine. 2 consecutive ACT-like domains span residues 393 to 473 (VFML…DISD) and 495 to 566 (RIIS…DETD).

It belongs to the serine/threonine dehydratase family. In terms of assembly, homotetramer. Pyridoxal 5'-phosphate serves as cofactor.

Its subcellular location is the mitochondrion. It catalyses the reaction L-threonine = 2-oxobutanoate + NH4(+). It participates in amino-acid biosynthesis; L-isoleucine biosynthesis; 2-oxobutanoate from L-threonine: step 1/1. Its activity is regulated as follows. Isoleucine allosterically inhibits while valine allosterically activates this enzyme. This is Threonine dehydratase, mitochondrial (ILV1) from Saccharomyces cerevisiae (strain ATCC 204508 / S288c) (Baker's yeast).